The primary structure comprises 84 residues: Large ribosomal subunit protein eL34 (84 aa).

This sequence belongs to the eukaryotic ribosomal protein eL34 family.

This Pyrobaculum islandicum (strain DSM 4184 / JCM 9189 / GEO3) protein is Large ribosomal subunit protein eL34.